The chain runs to 294 residues: Cytosolic Fe-S cluster assembly factor CFD1 (294 aa).

Residue 25-32 (GKGGVGKS) coordinates ATP. The [4Fe-4S] cluster site is built by cysteine 214 and cysteine 217.

It belongs to the Mrp/NBP35 ATP-binding proteins family. NUBP2/CFD1 subfamily. As to quaternary structure, heterotetramer of 2 NBP35 and 2 CFD1 chains. [4Fe-4S] cluster serves as cofactor.

It localises to the cytoplasm. In terms of biological role, component of the cytosolic iron-sulfur (Fe/S) protein assembly (CIA) machinery. Required for maturation of extramitochondrial Fe-S proteins. The NBP35-CFD1 heterotetramer forms a Fe-S scaffold complex, mediating the de novo assembly of an Fe-S cluster and its transfer to target apoproteins. Required for biogenesis and export of both ribosomal subunits, which may reflect a role in assembly of the Fe/S clusters in RLI1, a protein which performs rRNA processing and ribosome export. This Candida albicans (strain SC5314 / ATCC MYA-2876) (Yeast) protein is Cytosolic Fe-S cluster assembly factor CFD1.